Reading from the N-terminus, the 100-residue chain is Large ribosomal subunit protein uL23 (100 aa).

Belongs to the universal ribosomal protein uL23 family. As to quaternary structure, part of the 50S ribosomal subunit. Contacts protein L29, and trigger factor when it is bound to the ribosome.

One of the early assembly proteins it binds 23S rRNA. One of the proteins that surrounds the polypeptide exit tunnel on the outside of the ribosome. Forms the main docking site for trigger factor binding to the ribosome. In Vibrio campbellii (strain ATCC BAA-1116), this protein is Large ribosomal subunit protein uL23.